We begin with the raw amino-acid sequence, 115 residues long: Large ribosomal subunit protein bL20 (115 aa).

It belongs to the bacterial ribosomal protein bL20 family.

Its function is as follows. Binds directly to 23S ribosomal RNA and is necessary for the in vitro assembly process of the 50S ribosomal subunit. It is not involved in the protein synthesizing functions of that subunit. The sequence is that of Large ribosomal subunit protein bL20 from Prochlorococcus marinus (strain MIT 9515).